We begin with the raw amino-acid sequence, 565 residues long: Probable serine/threonine-protein kinase abkA (565 aa).

A coiled-coil region spans residues 44-77 (NNNNISLKDKFKDLKDLKDNLNEKKINNDNDDDD). Positions 231-565 (LFQDDPIAAA…FKNIFYKNYK (335 aa)) constitute a Protein kinase domain. Residues 237 to 245 (IAAASIGQV) and K259 contribute to the ATP site. The Proton acceptor role is filled by D401.

This sequence belongs to the protein kinase superfamily. ADCK protein kinase family.

This Dictyostelium discoideum (Social amoeba) protein is Probable serine/threonine-protein kinase abkA (abkA).